We begin with the raw amino-acid sequence, 377 residues long: Nitric oxide reductase FlRd-NAD(+) reductase (377 aa).

This sequence belongs to the FAD-dependent oxidoreductase family. FAD serves as cofactor.

The protein localises to the cytoplasm. It catalyses the reaction 2 reduced [nitric oxide reductase rubredoxin domain] + NAD(+) + H(+) = 2 oxidized [nitric oxide reductase rubredoxin domain] + NADH. It functions in the pathway nitrogen metabolism; nitric oxide reduction. One of at least two accessory proteins for anaerobic nitric oxide (NO) reductase. Reduces the rubredoxin moiety of NO reductase. The polypeptide is Nitric oxide reductase FlRd-NAD(+) reductase (Escherichia coli O9:H4 (strain HS)).